A 115-amino-acid polypeptide reads, in one-letter code: Large ribosomal subunit protein bL31B (115 aa).

The protein belongs to the bacterial ribosomal protein bL31 family. Type B subfamily. In terms of assembly, part of the 50S ribosomal subunit.

The polypeptide is Large ribosomal subunit protein bL31B (Polynucleobacter necessarius subsp. necessarius (strain STIR1)).